The chain runs to 179 residues: ATP synthase subunit delta (179 aa).

The protein belongs to the ATPase delta chain family. As to quaternary structure, F-type ATPases have 2 components, F(1) - the catalytic core - and F(0) - the membrane proton channel. F(1) has five subunits: alpha(3), beta(3), gamma(1), delta(1), epsilon(1). F(0) has three main subunits: a(1), b(2) and c(10-14). The alpha and beta chains form an alternating ring which encloses part of the gamma chain. F(1) is attached to F(0) by a central stalk formed by the gamma and epsilon chains, while a peripheral stalk is formed by the delta and b chains.

The protein resides in the cell inner membrane. In terms of biological role, f(1)F(0) ATP synthase produces ATP from ADP in the presence of a proton or sodium gradient. F-type ATPases consist of two structural domains, F(1) containing the extramembraneous catalytic core and F(0) containing the membrane proton channel, linked together by a central stalk and a peripheral stalk. During catalysis, ATP synthesis in the catalytic domain of F(1) is coupled via a rotary mechanism of the central stalk subunits to proton translocation. This protein is part of the stalk that links CF(0) to CF(1). It either transmits conformational changes from CF(0) to CF(1) or is implicated in proton conduction. In Polaromonas naphthalenivorans (strain CJ2), this protein is ATP synthase subunit delta.